A 912-amino-acid polypeptide reads, in one-letter code: Translation initiation factor IF-2 (912 aa).

Positions 26 to 297 (SDQGEFVKSA…RGRKSKRAKR (272 aa)) are disordered. Residues 56 to 74 (KPAPAASNGAAAEAAAPPK) are compositionally biased toward low complexity. Residues 100–120 (APEPPAAPAAPAAPAPKPSPA) are compositionally biased toward pro residues. Residues 121-131 (ARPAAAEAAAP) show a composition bias toward low complexity. Pro residues-rich tracts occupy residues 132–152 (APAP…PGAP), 173–183 (PRPQAPRPGAP), and 192–218 (NMPP…PGGG). Positions 219 to 283 (PRPGGAGRPG…GAAGAFGRPG (65 aa)) are enriched in gly residues. Basic residues predominate over residues 287–296 (KRGRKSKRAK). Residues 408 to 579 (TRPPVVTVMG…AVLLTADAAL (172 aa)) form the tr-type G domain. The interval 417–424 (GHVDHGKT) is G1. GTP is bound at residue 417–424 (GHVDHGKT). The interval 442-446 (GITQH) is G2. Residues 467 to 470 (DTPG) are G3. Residues 467–471 (DTPGH) and 521–524 (NKID) each bind GTP. The tract at residues 521 to 524 (NKID) is G4. Residues 557-559 (SAR) are G5.

Belongs to the TRAFAC class translation factor GTPase superfamily. Classic translation factor GTPase family. IF-2 subfamily.

The protein localises to the cytoplasm. In terms of biological role, one of the essential components for the initiation of protein synthesis. Protects formylmethionyl-tRNA from spontaneous hydrolysis and promotes its binding to the 30S ribosomal subunits. Also involved in the hydrolysis of GTP during the formation of the 70S ribosomal complex. This chain is Translation initiation factor IF-2, found in Mycobacteroides abscessus (strain ATCC 19977 / DSM 44196 / CCUG 20993 / CIP 104536 / JCM 13569 / NCTC 13031 / TMC 1543 / L948) (Mycobacterium abscessus).